We begin with the raw amino-acid sequence, 229 residues long: Demethylmenaquinone methyltransferase (229 aa).

Residues T62, D80, 100 to 101, and S117 each bind S-adenosyl-L-methionine; that span reads DG.

Belongs to the class I-like SAM-binding methyltransferase superfamily. MenG/UbiE family.

The enzyme catalyses a 2-demethylmenaquinol + S-adenosyl-L-methionine = a menaquinol + S-adenosyl-L-homocysteine + H(+). The protein operates within quinol/quinone metabolism; menaquinone biosynthesis; menaquinol from 1,4-dihydroxy-2-naphthoate: step 2/2. In terms of biological role, methyltransferase required for the conversion of demethylmenaquinol (DMKH2) to menaquinol (MKH2). The sequence is that of Demethylmenaquinone methyltransferase from Corynebacterium kroppenstedtii (strain DSM 44385 / JCM 11950 / CIP 105744 / CCUG 35717).